A 199-amino-acid chain; its full sequence is NAD(P)H dehydrogenase (quinone) (199 aa).

The Flavodoxin-like domain occupies 4–190 (VLVLYYSAYG…GGARYQGKVI (187 aa)). FMN-binding positions include 10–15 (SAYGHI) and 78–80 (TRF). NAD(+) is bound at residue Tyr12. Trp98 serves as a coordination point for substrate. Residues 113-119 (STASQHG) and His134 each bind FMN.

Belongs to the WrbA family. FMN serves as cofactor.

It carries out the reaction a quinone + NADH + H(+) = a quinol + NAD(+). It catalyses the reaction a quinone + NADPH + H(+) = a quinol + NADP(+). The polypeptide is NAD(P)H dehydrogenase (quinone) (Rhodopseudomonas palustris (strain BisB18)).